The following is a 154-amino-acid chain: Putative pre-16S rRNA nuclease (154 aa).

It belongs to the YqgF nuclease family.

It localises to the cytoplasm. Its function is as follows. Could be a nuclease involved in processing of the 5'-end of pre-16S rRNA. This chain is Putative pre-16S rRNA nuclease, found in Rickettsia peacockii (strain Rustic).